Consider the following 620-residue polypeptide: Glutathione-regulated potassium-efflux system protein KefC (620 aa).

Residues 1–3 (MDS) are Periplasmic-facing. A helical membrane pass occupies residues 4–24 (HTLVQALIYLGSAALIVPIAV). R25 is a topological domain (cytoplasmic). Residues 26–46 (LGLGSVLGYLIAGCIIGPWGL) traverse the membrane as a helical segment. Residues 47–53 (RLVTDAE) are Periplasmic-facing. The helical transmembrane segment at 54–74 (SILHFAEIGVVLMLFIIGLEL) threads the bilayer. Over 75–89 (DPQRLWKLRAAVFGG) the chain is Cytoplasmic. Residues 90–110 (GALQMVICGGLLGLFCMLLGL) form a helical membrane-spanning segment. Topologically, residues 111-113 (RWQ) are periplasmic. A helical membrane pass occupies residues 114 to 134 (VAELIGMTLALSSTAIAMQAM). Residues 135 to 148 (NERNLMVTQMGRSA) lie on the Cytoplasmic side of the membrane. The helical transmembrane segment at 149 to 169 (FAVLLFQDIAAIPLVAMIPLL) threads the bilayer. Residues 170–177 (AASSASTT) are Periplasmic-facing. The helical transmembrane segment at 178 to 198 (MGAFALSALKVAGALVLVVLL) threads the bilayer. Residues 199–213 (GRYVTRPALRFVARS) are Cytoplasmic-facing. Residues 214–233 (GLREVFSAVALFLVFGFGLL) form a helical membrane-spanning segment. Topologically, residues 234–236 (LEE) are periplasmic. The chain crosses the membrane as a helical span at residues 237–254 (VGLSMAMGAFLAGVLLAS). Residues 255–269 (SEYRHALESDIEPFK) lie on the Cytoplasmic side of the membrane. Residues 270–290 (GLLLGLFFIGVGMSIDFGTLI) form a helical membrane-spanning segment. Topologically, residues 291-293 (ENP) are periplasmic. A helical transmembrane segment spans residues 294–314 (LRIVILLLGFLIIKIAMLWLI). Topologically, residues 315 to 326 (ARPLQVPNKQRR) are cytoplasmic. Residues 327-347 (WFAVLLGQGSEFAFVVFGAAQ) form a helical membrane-spanning segment. Over 348-358 (MANVLEPEWAK) the chain is Periplasmic. The chain crosses the membrane as a helical span at residues 359-379 (SLTLAVALSMAATPILLVILN). At 380-620 (RLEQSSTEEA…ADEPETKPSS (241 aa)) the chain is on the cytoplasmic side. One can recognise an RCK N-terminal domain in the interval 399-518 (QPRVIIAGFG…AGVEKPERET (120 aa)). Residues 597–620 (GWQGTEEGKHTGNMADEPETKPSS) form a disordered region.

It belongs to the monovalent cation:proton antiporter 2 (CPA2) transporter (TC 2.A.37) family. KefC subfamily. As to quaternary structure, homodimer. Interacts with the regulatory subunit KefF.

The protein resides in the cell inner membrane. Its function is as follows. Pore-forming subunit of a potassium efflux system that confers protection against electrophiles. Catalyzes K(+)/H(+) antiport. The polypeptide is Glutathione-regulated potassium-efflux system protein KefC (Escherichia coli O157:H7).